We begin with the raw amino-acid sequence, 54 residues long: UPF0434 protein BCI_0256 (54 aa).

Belongs to the UPF0434 family.

This chain is UPF0434 protein BCI_0256, found in Baumannia cicadellinicola subsp. Homalodisca coagulata.